The chain runs to 328 residues: Lactamase-like protein nscB (328 aa).

Zn(2+) is bound by residues His97, His99, Asp101, and His102. Asp101 (proton donor/acceptor) is an active-site residue.

It belongs to the metallo-beta-lactamase superfamily. Requires Zn(2+) as cofactor.

It participates in secondary metabolite biosynthesis. In terms of biological role, lactamase-like protein; part of the gene cluster that mediates the biosynthesis of neosartoricin, a prenylated anthracenone that exhibits T-cell antiproliferative activity, suggestive of a physiological role as an immunosuppressive agent. The non-reducing polyketide synthase nscA probably synthesizes and cyclizes the decaketide backbone. The hydrolase nscB then mediates the product release through hydrolysis followed by spontaneous decarboxylation. The prenyltransferase nscD catalyzes the addition of the dimethylallyl group to the aromatic C5. The FAD-dependent monooxygenase nscC is then responsible for the stereospecific hydroxylation at C2. There is no gene encoding O-acetyltransferase in the nsc gene cluster; thus, the last step of 2-O-acetylation leading to neosartoricin may be catalyzed by an unidentified O-acetyltransferase. In Neosartorya fischeri (strain ATCC 1020 / DSM 3700 / CBS 544.65 / FGSC A1164 / JCM 1740 / NRRL 181 / WB 181) (Aspergillus fischerianus), this protein is Lactamase-like protein nscB.